Reading from the N-terminus, the 234-residue chain is Transcriptional regulatory protein CitB (234 aa).

The 117-residue stretch at 5-121 folds into the Response regulatory domain; it reads TTLIVEDEPM…RLQHTLERFA (117 aa). Aspartate 56 carries the 4-aspartylphosphate modification. A DNA-binding region (H-T-H motif) is located at residues 181 to 200; that stretch reads ADSLARILGSSKTTARRYLE.

In terms of assembly, in vitro CitB and the CitA kinase domain form a complex, formation of which is enhanced by ATP. Phosphorylated by CitA.

It localises to the cytoplasm. In terms of biological role, member of the two-component regulatory system CitA/CitB essential for expression of citrate-specific fermentation genes. Phosphorylated CitB binds to two sites in the citS-citC intergenic region where it probably activates transcription of both genes. The polypeptide is Transcriptional regulatory protein CitB (citB) (Klebsiella pneumoniae).